We begin with the raw amino-acid sequence, 83 residues long: Small ribosomal subunit protein bS20 (83 aa).

Residues 1–21 (MPNIKSAIKRVRTTETAEERN) are disordered. A compositionally biased stretch (basic and acidic residues) spans 12–21 (RTTETAEERN).

Belongs to the bacterial ribosomal protein bS20 family.

Binds directly to 16S ribosomal RNA. The sequence is that of Small ribosomal subunit protein bS20 from Staphylococcus epidermidis (strain ATCC 35984 / DSM 28319 / BCRC 17069 / CCUG 31568 / BM 3577 / RP62A).